Here is a 315-residue protein sequence, read N- to C-terminus: Ribosomal RNA small subunit methyltransferase H (315 aa).

Residues 35-37 (GGH), aspartate 55, phenylalanine 80, aspartate 102, and glutamine 109 contribute to the S-adenosyl-L-methionine site.

This sequence belongs to the methyltransferase superfamily. RsmH family.

Its subcellular location is the cytoplasm. It catalyses the reaction cytidine(1402) in 16S rRNA + S-adenosyl-L-methionine = N(4)-methylcytidine(1402) in 16S rRNA + S-adenosyl-L-homocysteine + H(+). Its function is as follows. Specifically methylates the N4 position of cytidine in position 1402 (C1402) of 16S rRNA. This Buchnera aphidicola subsp. Baizongia pistaciae (strain Bp) protein is Ribosomal RNA small subunit methyltransferase H.